Here is a 270-residue protein sequence, read N- to C-terminus: MQYWGKIIGVAVALMMGGGFWGVVLGLLVGHMFDKARSRKMAWFANQRERQALFFATTFEVMGHLTKSKGRVTEADIHIASQLMDRMNLHGDSRTAAQNAFRVGKADNYPLREKMRQFRSVCFGRFDLIRMFLEIQIQAAFADGSLHPNEREVLYVIAEELGISRVQFDQFLRMMQGGAQFGGGYHQQSGGGWQQAQRGPTLEDACNVLGVKTTDDATTIKRAYRKLMSEHHPDKLVAKGLPPEMMEMAKQKAQEIQKAYELIKEQKGFK.

Residues 1–6 (MQYWGK) lie on the Periplasmic side of the membrane. The helical transmembrane segment at 7 to 31 (IIGVAVALMMGGGFWGVVLGLLVGH) threads the bilayer. The Cytoplasmic segment spans residues 32–270 (MFDKARSRKM…ELIKEQKGFK (239 aa)). One can recognise a J domain in the interval 204–270 (DACNVLGVKT…ELIKEQKGFK (67 aa)).

As to quaternary structure, homodimer.

The protein resides in the cell inner membrane. Its function is as follows. Regulatory DnaK co-chaperone. Direct interaction between DnaK and DjlA is needed for the induction of the wcaABCDE operon, involved in the synthesis of a colanic acid polysaccharide capsule, possibly through activation of the RcsB/RcsC phosphotransfer signaling pathway. The colanic acid capsule may help the bacterium survive conditions outside the host. This chain is Co-chaperone protein DjlA, found in Salmonella paratyphi A (strain ATCC 9150 / SARB42).